Reading from the N-terminus, the 42-residue chain is uncharacterized protein (42 aa).

Residues 10-30 (VANWVTVILMALAGYAVLALA) form a helical membrane-spanning segment.

Its subcellular location is the host membrane. This is an uncharacterized protein from Acinetobacter calcoaceticus (Arthrobacter siderocapsulatus).